The following is a 1177-amino-acid chain: Solute carrier family 9 member C1 (1177 aa).

Residues methionine 1–glutamate 17 lie on the Extracellular side of the membrane. The chain crosses the membrane as a helical span at residues valine 18–glutamate 37. The Cytoplasmic segment spans residues aspartate 38–proline 42. The chain crosses the membrane as a helical span at residues valine 43–threonine 60. Residues serine 61–proline 76 lie on the Extracellular side of the membrane. A helical membrane pass occupies residues aspartate 77–phenylalanine 93. Topologically, residues aspartate 94–leucine 103 are cytoplasmic. Residues phenylalanine 104–valine 129 traverse the membrane as a helical segment. Residues phenylalanine 104–aspartate 191 form a transport core domain region. The Extracellular portion of the chain corresponds to asparagine 130–lysine 135. A helical transmembrane segment spans residues proline 136–leucine 161. Topologically, residues glycine 162–serine 164 are cytoplasmic. Residues arginine 165–methionine 190 traverse the membrane as a helical segment. Over aspartate 191 to leucine 204 the chain is Extracellular. The chain crosses the membrane as a helical span at residues alanine 205 to threonine 236. Residues valine 237–aspartate 240 are Cytoplasmic-facing. A helical transmembrane segment spans residues aspartate 241 to valine 262. Residues glycine 263 to serine 265 lie on the Extracellular side of the membrane. The helical transmembrane segment at glycine 266–serine 279 threads the bilayer. Residues threonine 280–isoleucine 286 are Cytoplasmic-facing. A helical membrane pass occupies residues glutamate 287–tyrosine 319. Over leucine 320–phenylalanine 324 the chain is Extracellular. The helical transmembrane segment at valine 325 to arginine 354 threads the bilayer. Residues valine 325–leucine 426 form a transport core domain region. Residues valine 355–serine 360 are Cytoplasmic-facing. Residues tryptophan 361–phenylalanine 391 traverse the membrane as a helical segment. Residues glycine 392–lysine 395 are Extracellular-facing. The chain crosses the membrane as a helical span at residues glutamate 396–leucine 426. The Cytoplasmic segment spans residues glycine 427–glutamate 612. Positions tyrosine 598 to phenylalanine 678 are ion transport-like. The helical transmembrane segment at phenylalanine 613–isoleucine 633 threads the bilayer. At serine 634–asparagine 637 the chain is on the extracellular side. Residues valine 638–alanine 664 form a helical membrane-spanning segment. The Cytoplasmic segment spans residues alanine 665 to phenylalanine 671. Residues serine 672 to aspartate 696 form a helical membrane-spanning segment. At threonine 697–glutamate 704 the chain is on the extracellular side. A helical transmembrane segment spans residues threonine 705–leucine 731. The Cytoplasmic segment spans residues glutamine 732–glutamate 1177.

Belongs to the monovalent cation:proton antiporter 1 (CPA1) transporter (TC 2.A.36) family. As to quaternary structure, interacts with soluble adenylyl cyclase (sAC). Sperm.

It localises to the cell projection. The protein localises to the cilium. Its subcellular location is the flagellum membrane. Functionally, sperm-specific solute carrier involved in intracellular pH regulation of spermatozoa. Required for sperm motility and fertility. Involved in sperm cell hyperactivation, a step needed for sperm motility which is essential late in the preparation of sperm for fertilization. Required for the expression and bicarbonate regulation of the soluble adenylyl cyclase (sAC). In Homo sapiens (Human), this protein is Solute carrier family 9 member C1 (SLC9C1).